The sequence spans 185 residues: Orotate phosphoribosyltransferase (185 aa).

5-phospho-alpha-D-ribose 1-diphosphate contacts are provided by residues Arg94, Lys95, Lys98, His100, and 120–128 (EDVTTTGGS). The orotate site is built by Thr124 and Arg152.

Belongs to the purine/pyrimidine phosphoribosyltransferase family. PyrE subfamily. As to quaternary structure, homodimer. Mg(2+) serves as cofactor.

It carries out the reaction orotidine 5'-phosphate + diphosphate = orotate + 5-phospho-alpha-D-ribose 1-diphosphate. The protein operates within pyrimidine metabolism; UMP biosynthesis via de novo pathway; UMP from orotate: step 1/2. Functionally, catalyzes the transfer of a ribosyl phosphate group from 5-phosphoribose 1-diphosphate to orotate, leading to the formation of orotidine monophosphate (OMP). This is Orotate phosphoribosyltransferase from Thermococcus kodakarensis (strain ATCC BAA-918 / JCM 12380 / KOD1) (Pyrococcus kodakaraensis (strain KOD1)).